A 501-amino-acid chain; its full sequence is Alveolysin (501 aa).

Residues 1-32 (MKKKSNHLKGRKVLVSLLVSLQVFAFASISSA) form the signal peptide. Transmembrane regions (beta stranded) follow at residues 191-204 (QNQI…NAKV), 211-220 (IDFNAVANGE), 289-298 (SNDVQTAFKL), and 306-318 (QASG…YENS). The Conserved undecapeptide motif lies at 460 to 470 (ECTGLAWEWWR). Positions 492 to 493 (TL) match the Cholesterol binding motif.

This sequence belongs to the cholesterol-dependent cytolysin family. In terms of assembly, homooligomeric pore complex of 35 to 50 subunits; when inserted in the host membrane.

Its subcellular location is the secreted. It is found in the host cell membrane. With respect to regulation, inhibited by cholesterol and thiol reagents. Functionally, a cholesterol-dependent toxin that causes cytolysis by forming pores in cholesterol containing host membranes. After binding to target membranes, the protein undergoes a major conformation change, leading to its insertion in the host membrane and formation of an oligomeric pore complex. Cholesterol is required for binding to host cell membranes, membrane insertion and pore formation; cholesterol binding is mediated by a Thr-Leu pair in the C-terminus. Can be reversibly inactivated by oxidation. The sequence is that of Alveolysin (alv) from Paenibacillus alvei (Bacillus alvei).